We begin with the raw amino-acid sequence, 593 residues long: Aspartate--tRNA(Asp/Asn) ligase (593 aa).

Residue Glu-173 coordinates L-aspartate. Positions 197–200 (QLFK) are aspartate. Arg-219 is an L-aspartate binding site. ATP is bound by residues 219 to 221 (RDE) and Gln-228. Residue His-451 coordinates L-aspartate. Glu-485 is an ATP binding site. Residue Arg-492 coordinates L-aspartate. 537-540 (GIDR) is an ATP binding site.

The protein belongs to the class-II aminoacyl-tRNA synthetase family. Type 1 subfamily. In terms of assembly, homodimer.

The protein localises to the cytoplasm. The catalysed reaction is tRNA(Asx) + L-aspartate + ATP = L-aspartyl-tRNA(Asx) + AMP + diphosphate. Functionally, aspartyl-tRNA synthetase with relaxed tRNA specificity since it is able to aspartylate not only its cognate tRNA(Asp) but also tRNA(Asn). Reaction proceeds in two steps: L-aspartate is first activated by ATP to form Asp-AMP and then transferred to the acceptor end of tRNA(Asp/Asn). The polypeptide is Aspartate--tRNA(Asp/Asn) ligase (Legionella pneumophila subsp. pneumophila (strain Philadelphia 1 / ATCC 33152 / DSM 7513)).